The primary structure comprises 217 residues: Kunitz-type trypsin inhibitor-like 2 protein (217 aa).

The signal sequence occupies residues 1–26 (MKPLSPLTLSFLLFVFITTLSLAFSN). Cystine bridges form between Cys-70/Cys-115 and Cys-168/Cys-175. Asn-191 carries N-linked (GlcNAc...) asparagine glycosylation.

The protein belongs to the protease inhibitor I3 (leguminous Kunitz-type inhibitor) family.

The protein localises to the secreted. Its function is as follows. Might act as a protease inhibitor involved in plant defense responses. In Pisum sativum (Garden pea), this protein is Kunitz-type trypsin inhibitor-like 2 protein (PIP20-2).